The chain runs to 390 residues: MCNNEAKMSELLSVQSDAPAKKINLMDLTRQQMREFFKELGEKPFRADQLVKWIYHFGEDNFDNMTNINKKLREKLKAVAEIKAPEVAVEQRSADGTIKWAMQVGEQQVETVYIPEADRATLCVSSQVGCALACTFCSTAQQGFNRNLTVSEIIGQVWRASKIIGNFGVTGVRPITNVVMMGMGEPLLNVANVVPAMEIMLDDFAYGLSKRRVTLSTSGVVPALDNLSKMIDVALAISLHAPNDELRDEIVPINKKYNIKTLIDSVNRYLTVSNANHGKVTIEYVMLDHVNDGVEHAHQLADVLKNTPCKINLIPWNPFPEAPYAKSSNTRIDRFQKTLMEYDFTVIIRKTRGDDIDAACGQLAGDVIDRTKRTAMKRQFGQNIGVTEVN.

Glu-110 (proton acceptor) is an active-site residue. Residues 116-355 form the Radical SAM core domain; the sequence is EADRATLCVS…VIIRKTRGDD (240 aa). A disulfide bridge connects residues Cys-123 and Cys-360. [4Fe-4S] cluster-binding residues include Cys-130, Cys-134, and Cys-137. S-adenosyl-L-methionine-binding positions include 184-185, Ser-216, 238-240, and Asn-317; these read GE and SLH. Cys-360 serves as the catalytic S-methylcysteine intermediate.

Belongs to the radical SAM superfamily. RlmN family. It depends on [4Fe-4S] cluster as a cofactor.

The protein localises to the cytoplasm. The enzyme catalyses adenosine(2503) in 23S rRNA + 2 reduced [2Fe-2S]-[ferredoxin] + 2 S-adenosyl-L-methionine = 2-methyladenosine(2503) in 23S rRNA + 5'-deoxyadenosine + L-methionine + 2 oxidized [2Fe-2S]-[ferredoxin] + S-adenosyl-L-homocysteine. The catalysed reaction is adenosine(37) in tRNA + 2 reduced [2Fe-2S]-[ferredoxin] + 2 S-adenosyl-L-methionine = 2-methyladenosine(37) in tRNA + 5'-deoxyadenosine + L-methionine + 2 oxidized [2Fe-2S]-[ferredoxin] + S-adenosyl-L-homocysteine. Specifically methylates position 2 of adenine 2503 in 23S rRNA and position 2 of adenine 37 in tRNAs. m2A2503 modification seems to play a crucial role in the proofreading step occurring at the peptidyl transferase center and thus would serve to optimize ribosomal fidelity. The sequence is that of Dual-specificity RNA methyltransferase RlmN from Haemophilus influenzae (strain PittEE).